We begin with the raw amino-acid sequence, 314 residues long: ATP synthase gamma chain (314 aa).

It belongs to the ATPase gamma chain family. F-type ATPases have 2 components, CF(1) - the catalytic core - and CF(0) - the membrane proton channel. CF(1) has five subunits: alpha(3), beta(3), gamma(1), delta(1), epsilon(1). CF(0) has three main subunits: a, b and c.

Its subcellular location is the cell membrane. Produces ATP from ADP in the presence of a proton gradient across the membrane. The gamma chain is believed to be important in regulating ATPase activity and the flow of protons through the CF(0) complex. In Limosilactobacillus reuteri (strain DSM 20016) (Lactobacillus reuteri), this protein is ATP synthase gamma chain.